The following is a 223-amino-acid chain: Uracil-DNA glycosylase (223 aa).

Asp-67 serves as the catalytic Proton acceptor.

It belongs to the uracil-DNA glycosylase (UDG) superfamily. UNG family.

The protein resides in the cytoplasm. It catalyses the reaction Hydrolyzes single-stranded DNA or mismatched double-stranded DNA and polynucleotides, releasing free uracil.. Functionally, excises uracil residues from the DNA which can arise as a result of misincorporation of dUMP residues by DNA polymerase or due to deamination of cytosine. This chain is Uracil-DNA glycosylase, found in Borrelia hermsii (strain HS1 / DAH).